A 215-amino-acid chain; its full sequence is Cytochrome b6 (215 aa).

Residues 32 to 52 (IFYCLGGITFTCFLLQVASGF) form a helical membrane-spanning segment. A heme c-binding site is contributed by C35. Heme b contacts are provided by H86 and H100. Transmembrane regions (helical) follow at residues 90-110 (ASMMVLTMILHVFRVYLTGGF), 116-136 (LTWVTGVILAVLTVSFGVTGY), and 186-206 (LHTFILPLLTAVFMLMHFLMI). Residues H187 and H202 each contribute to the heme b site.

It belongs to the cytochrome b family. PetB subfamily. The 4 large subunits of the cytochrome b6-f complex are cytochrome b6, subunit IV (17 kDa polypeptide, PetD), cytochrome f and the Rieske protein, while the 4 small subunits are PetG, PetL, PetM and PetN. The complex functions as a dimer. It depends on heme b as a cofactor. Requires heme c as cofactor.

It is found in the plastid. Its subcellular location is the chloroplast thylakoid membrane. Component of the cytochrome b6-f complex, which mediates electron transfer between photosystem II (PSII) and photosystem I (PSI), cyclic electron flow around PSI, and state transitions. The sequence is that of Cytochrome b6 from Coleochaete orbicularis (Charophycean green alga).